A 1140-amino-acid chain; its full sequence is MARYTQRPENALKRANEFIEVGKPLRALDTLQEVFRNKRWNYAYSETVIEPLMFKYLYLCVELKKSHIAKEGLFQYRNMFQLVNVNSLENVIRGYLKMAEEHTEAAQAQSSAAVAVLELDDLDNIATPESILMSAVCGEDAQDRSDRTILLPWVKFLWESYCQCLELLRVNTHCEALYHDIARMAFQFCLKYNRKSEFRRLCDKLRKHLEDICKSSNQTTGVSINKVETQQLCLDTRLYLLDSAIQMELWQEAYKAIEDIHGLMALSKKTPVPKTMANYYQKLAMVFSKAGNQLFHAAALLKLFQLTRELKKNLTKDDLQRMAAHVLLATLSIPLPSAHPEFDRFIEADKSPLEKAQKLAVLLGLPQPPTRVSLIREVVRLNVPQLVSEDFRNLYNWLEVDFNPLNLCKRIQSIVDFIENGPENALLTPYIQSLKDVTIMRLIRQISQVYESIKFQRLLQLASFCNIFELEKLLVESVRHNDMQIRIDHQKNSIYFGTDLTESQREYRPDGPALQSMPSEQIRSQLVNMSTVLTRAVSIVYPNRERDQRAKLRNQMVNHYHEIKDREHQRILQRQKIIEDRKEYIEKQNNAREEEEARRQEEESRKAKLAEQKRLEQEQEERERKRHQNEIQAIREKSLKEKVQQISQTAHGKKMLSKLDEEGIKKLDAEQIAKRESEELQREAKELQSKLKSQEKKIDYFERAKRLEEIPLFEKYLAEKQVKDKEFWEATEKTRIENAIAERKDAVAQQERLKRMYPDRDEFLEALKKERASLYVEKLKKFEAALEAERKKRLADRIIRRREERRQAFLREKEEERLRKEEEIRLAQAAEERAAAEARRLEREAEDEKRRAQYEKQRAKEEEAERKIKEDRDRLSRELASERERTEKDRDTWRPRGGDRPSASNGGSSEWRRAAPAASERNDRGGERIERGGERIERGGERLERGGERIERGGDRDRKDNEGADSSWRVRREPDSQRAAAPKDSGAPQSRDDKWRRGGERDRDFRIDGARRDRDDGPRRDRDDGPRRDRDDERGGFRRADGARRTDEPQRETGGNWRDAPRHADRETRRPAERRDRDVRETRGDQRGSAPKEAASGGVGGNWRTAPATREEKPAAKRDQAQEKENKAGDDGEWTSVKRR.

The PCI domain maps to 319-501; the sequence is LQRMAAHVLL…NSIYFGTDLT (183 aa). 2 stretches are compositionally biased toward basic and acidic residues: residues 588 to 623 and 829 to 899; these read QNNA…EERE and AAEE…RGGD. 2 disordered regions span residues 588 to 630 and 829 to 1140; these read QNNA…HQNE and AAEE…VKRR. Position 908 is a phosphoserine (S908). Basic and acidic residues-rich tracts occupy residues 920 to 976, 990 to 1051, 1059 to 1086, and 1109 to 1130; these read ERND…EPDS, SRDD…EPQR, DAPR…RGDQ, and TREE…KAGD.

The protein belongs to the eIF-3 subunit A family. As to quaternary structure, component of the eukaryotic translation initiation factor 3 (eIF-3) complex. The eIF-3 complex interacts with pix.

It localises to the cytoplasm. RNA-binding component of the eukaryotic translation initiation factor 3 (eIF-3) complex, which is involved in protein synthesis of a specialized repertoire of mRNAs and, together with other initiation factors, stimulates binding of mRNA and methionyl-tRNAi to the 40S ribosome. The eIF-3 complex specifically targets and initiates translation of a subset of mRNAs involved in cell proliferation. The protein is Eukaryotic translation initiation factor 3 subunit A of Drosophila melanogaster (Fruit fly).